Reading from the N-terminus, the 158-residue chain is SsrA-binding protein (158 aa).

Belongs to the SmpB family.

Its subcellular location is the cytoplasm. Required for rescue of stalled ribosomes mediated by trans-translation. Binds to transfer-messenger RNA (tmRNA), required for stable association of tmRNA with ribosomes. tmRNA and SmpB together mimic tRNA shape, replacing the anticodon stem-loop with SmpB. tmRNA is encoded by the ssrA gene; the 2 termini fold to resemble tRNA(Ala) and it encodes a 'tag peptide', a short internal open reading frame. During trans-translation Ala-aminoacylated tmRNA acts like a tRNA, entering the A-site of stalled ribosomes, displacing the stalled mRNA. The ribosome then switches to translate the ORF on the tmRNA; the nascent peptide is terminated with the 'tag peptide' encoded by the tmRNA and targeted for degradation. The ribosome is freed to recommence translation, which seems to be the essential function of trans-translation. This is SsrA-binding protein from Bartonella henselae (strain ATCC 49882 / DSM 28221 / CCUG 30454 / Houston 1) (Rochalimaea henselae).